The primary structure comprises 624 residues: Chaperone protein HtpG (624 aa).

The tract at residues 1–336 (MKGQETRGFQ…SNDLPLNVSR (336 aa)) is a; substrate-binding. A b region spans residues 337 to 552 (EILQDSTVTR…ADEMSTQMAK (216 aa)). The segment at 553 to 624 (LFAAAGQSVP…IRRMNQLLVS (72 aa)) is c.

It belongs to the heat shock protein 90 family. As to quaternary structure, homodimer.

The protein resides in the cytoplasm. In terms of biological role, molecular chaperone. Has ATPase activity. The sequence is that of Chaperone protein HtpG from Salmonella paratyphi A (strain ATCC 9150 / SARB42).